The following is a 260-amino-acid chain: Uroplakin-1b (260 aa).

At M1–Q12 the chain is on the cytoplasmic side. Residues G13–S38 form a helical membrane-spanning segment. Over D39 to W60 the chain is Extracellular. The chain crosses the membrane as a helical span at residues I61–M81. Residues K82–K86 lie on the Cytoplasmic side of the membrane. The helical transmembrane segment at I87–I107 threads the bilayer. Residues T108 to H229 lie on the Extracellular side of the membrane. Residues A230–G250 form a helical membrane-spanning segment. At T251–Y260 the chain is on the cytoplasmic side.

The protein belongs to the tetraspanin (TM4SF) family. In terms of assembly, heterodimer with uroplakin-3A (UPK3A) or uroplakin-3B (UPK3B).

It localises to the membrane. Functionally, component of the asymmetric unit membrane (AUM); a highly specialized biomembrane elaborated by terminally differentiated urothelial cells. This is Uroplakin-1b (UPK1B) from Neovison vison (American mink).